A 459-amino-acid chain; its full sequence is Phosphoglucosamine mutase (459 aa).

Serine 100 (phosphoserine intermediate) is an active-site residue. Residues serine 100, aspartate 256, aspartate 258, and aspartate 260 each coordinate Mg(2+). Residue serine 100 is modified to Phosphoserine.

It belongs to the phosphohexose mutase family. Mg(2+) is required as a cofactor. Activated by phosphorylation.

It carries out the reaction alpha-D-glucosamine 1-phosphate = D-glucosamine 6-phosphate. In terms of biological role, catalyzes the conversion of glucosamine-6-phosphate to glucosamine-1-phosphate. The sequence is that of Phosphoglucosamine mutase from Heliobacterium modesticaldum (strain ATCC 51547 / Ice1).